The sequence spans 547 residues: MAAKEVKFGREARERLLRGVDILANAVKVTLGPKGRNVVIDKSFGAPRITKDGVSVAKEIELEDKFENMGAQMLREVASKTNDIAGDGTTTATVLGQAIVQEGVKAVAAGMNPMDLKRGIDAAVEEVVGNLFKKAKKIQTSAEIAQVGTISANGAAEIGKMIADAMEKVGNEGVITVEEAKTAETELEVVEGMQFDRGYLSPYFVTNADKMVADLDDPYILIHEKKLSNLQSLLPVLEAVVQSGKPLLIIAEDVEGEALATLVVNKLRGGLKIAAVKAPGFGDRRKAMLEDIAILTSGQVISEDVGIKLENVTLDMLGRAKKVNISKENTTIIDGAGKKAEINARVNQIKVQIEETTSDYDREKLQERLAKLAGGVAVIRVGGATEVEVKEKKDRVDDALNATRAAVEEGIVAGGGTALLRAANALAIKGSNPDQEAGINIVRRALQAPARQIATNAGEEAAIIVGKVLENNADTFGYNTATGQFGDLIALGIVDPVKVVRSALQNAASIASLLITTEAMVAEVPKKDTPMPPMPGGGMGGMGGMDF.

Residues 30–33 (TLGP), K51, 87–91 (DGTTT), G415, and D495 contribute to the ATP site.

The protein belongs to the chaperonin (HSP60) family. In terms of assembly, forms a cylinder of 14 subunits composed of two heptameric rings stacked back-to-back. Interacts with the co-chaperonin GroES.

The protein resides in the cytoplasm. It catalyses the reaction ATP + H2O + a folded polypeptide = ADP + phosphate + an unfolded polypeptide.. Functionally, together with its co-chaperonin GroES, plays an essential role in assisting protein folding. The GroEL-GroES system forms a nano-cage that allows encapsulation of the non-native substrate proteins and provides a physical environment optimized to promote and accelerate protein folding. This is Chaperonin GroEL from Bartonella quintana (strain Toulouse) (Rochalimaea quintana).